Here is a 262-residue protein sequence, read N- to C-terminus: Acyl-[acyl-carrier-protein]--UDP-N-acetylglucosamine O-acyltransferase (262 aa).

Belongs to the transferase hexapeptide repeat family. LpxA subfamily. In terms of assembly, homotrimer.

The protein resides in the cytoplasm. The enzyme catalyses a (3R)-hydroxyacyl-[ACP] + UDP-N-acetyl-alpha-D-glucosamine = a UDP-3-O-[(3R)-3-hydroxyacyl]-N-acetyl-alpha-D-glucosamine + holo-[ACP]. The protein operates within glycolipid biosynthesis; lipid IV(A) biosynthesis; lipid IV(A) from (3R)-3-hydroxytetradecanoyl-[acyl-carrier-protein] and UDP-N-acetyl-alpha-D-glucosamine: step 1/6. In terms of biological role, involved in the biosynthesis of lipid A, a phosphorylated glycolipid that anchors the lipopolysaccharide to the outer membrane of the cell. The protein is Acyl-[acyl-carrier-protein]--UDP-N-acetylglucosamine O-acyltransferase of Blochmanniella floridana.